Here is a 665-residue protein sequence, read N- to C-terminus: Fermitin family homolog 3 (665 aa).

Tyrosine 11 is subject to Phosphotyrosine. The 328-residue stretch at 229-556 (WLDSSRCLMQ…SLPDFGISYV (328 aa)) folds into the FERM domain. Residues 354–453 (DHLRIFRPRK…WMAGCRLASK (100 aa)) enclose the PH domain. Tyrosine 502 is modified (phosphotyrosine). Threonine 589 bears the Phosphothreonine mark.

This sequence belongs to the kindlin family. As to quaternary structure, interacts with ITGB1, ITGB2 and ITGB3 (via cytoplasmic tails).

The protein localises to the cell projection. It localises to the podosome. Plays a central role in cell adhesion in hematopoietic cells. Acts by activating the integrin beta-1-3 (ITGB1, ITGB2 and ITGB3). Required for integrin-mediated platelet adhesion and leukocyte adhesion to endothelial cells. Required for activation of integrin beta-2 (ITGB2) in polymorphonuclear granulocytes (PMNs). The sequence is that of Fermitin family homolog 3 (FERMT3) from Bos taurus (Bovine).